The primary structure comprises 415 residues: Serine hydroxymethyltransferase (415 aa).

(6S)-5,6,7,8-tetrahydrofolate contacts are provided by residues Leu122 and 126 to 128 (GHL). Lys230 is modified (N6-(pyridoxal phosphate)lysine).

The protein belongs to the SHMT family. In terms of assembly, homodimer. Pyridoxal 5'-phosphate is required as a cofactor.

It is found in the cytoplasm. It carries out the reaction (6R)-5,10-methylene-5,6,7,8-tetrahydrofolate + glycine + H2O = (6S)-5,6,7,8-tetrahydrofolate + L-serine. It participates in one-carbon metabolism; tetrahydrofolate interconversion. The protein operates within amino-acid biosynthesis; glycine biosynthesis; glycine from L-serine: step 1/1. In terms of biological role, catalyzes the reversible interconversion of serine and glycine with tetrahydrofolate (THF) serving as the one-carbon carrier. This reaction serves as the major source of one-carbon groups required for the biosynthesis of purines, thymidylate, methionine, and other important biomolecules. Also exhibits THF-independent aldolase activity toward beta-hydroxyamino acids, producing glycine and aldehydes, via a retro-aldol mechanism. The sequence is that of Serine hydroxymethyltransferase from Cupriavidus necator (strain ATCC 17699 / DSM 428 / KCTC 22496 / NCIMB 10442 / H16 / Stanier 337) (Ralstonia eutropha).